A 549-amino-acid polypeptide reads, in one-letter code: Probable glucomannan 4-beta-mannosyltransferase 4 (549 aa).

A helical transmembrane segment spans residues 35–55 (VAPVLQFAVWACMAMSVMLVL). D151 is a catalytic residue. Positions 210 and 212 each coordinate substrate. Residue D304 is part of the active site. The next 4 helical transmembrane spans lie at 383–403 (VVAP…SVMV), 406–426 (VSIP…MNAI), 497–517 (IYIP…YDLV), and 523–543 (YYLY…GFAG).

The protein belongs to the glycosyltransferase 2 family. Plant cellulose synthase-like A subfamily.

It localises to the golgi apparatus membrane. The enzyme catalyses GDP-mannose + (glucomannan)n = GDP + (glucomannan)n+1.. In terms of biological role, probable mannan synthase which consists of a 4-beta-mannosyltransferase activity on mannan using GDP-mannose. The beta-1,4-mannan product is the backbone for galactomannan synthesis by galactomannan galactosyltransferase. Galactomannan is a noncellulosic polysaccharides of plant cell wall. This Oryza sativa subsp. japonica (Rice) protein is Probable glucomannan 4-beta-mannosyltransferase 4.